Consider the following 721-residue polypeptide: MPRRKKKGKEASGAQNLEKKDAETASSVSVKKKRRIEDGFIVISDSDGEEPKEENGLQKTKIKQSSRAKCLAKRKIAQMTEEEQFALALKMSEQEAREVNSQEEEEEELLRKAIAESLNSCRPSDASATRSRPLATGPSSESHQEKSTDSGTTEGIWQLVPPSLFKGSHISQGNESEEREEPWDHNENTEEEPVSVSSGSWDQSSQPVFENENVKCFDRCTGHLAEHTQCGKPQNECGRGSAFLKAVQGSGDTSRHCLPTLADAKGLQDTGGTVNYFWGIPFCPDGVDPNQYTKVILCQLEVYQKSLKMAQRQLLNKKGFGEPVLPRPPSLIQNECGQGEQASEKNEGISEDMGDEDKEERQESRASVWRAKTKDFQEGPIKTLKEKLLLEEEPTTSHGQSSQGLFVEETSEEGNSVPASQSIAALTGKRSSVLMPESSAEEITVCPETQLSSPETFDLEKEGFPDSRETLYEVSIMADKEVDNREDAKKEIHTSTFSSSTQVSCPLCDQGFPPTKIERHAMYCNGLMGGDTVLTRRQKEAKNKSDNGIAAQTSLDIDKNEKCYLCKSLVPFREYQCHVESCLQLARVDQGDGPEESGRLCLAVDGKRPQQLKNLKEKDRSEGRLISLLEQSEYKTTDAEIKTKFSETGDFRVPSAGVEEAGCSREMQSSLAHLDLNESPIKSFVSVSEAADCLVDFKKQLTARPGSRTRTKAGRGRRRKS.

The segment at 1–65 (MPRRKKKGKE…GLQKTKIKQS (65 aa)) is disordered. The interval 1–101 (MPRRKKKGKE…SEQEAREVNS (101 aa)) is necessary for transcriptional repression. A Glycyl lysine isopeptide (Lys-Gly) (interchain with G-Cter in SUMO2) cross-link involves residue Lys-20. At Ser-29 the chain carries Phosphoserine. A Glycyl lysine isopeptide (Lys-Gly) (interchain with G-Cter in SUMO2) cross-link involves residue Lys-31. 2 positions are modified to phosphoserine: Ser-44 and Ser-46. An LR motif motif is present at residues 60–78 (TKIKQSSRAKCLAKRKIAQ). Glycyl lysine isopeptide (Lys-Gly) (interchain with G-Cter in SUMO2) cross-links involve residues Lys-75 and Lys-90. Positions 80 to 99 (TEEEQFALALKMSEQEAREV) constitute a UIM 1 domain. The interval 93–204 (EQEAREVNSQ…SVSSGSWDQS (112 aa)) is disordered. Residues 97-103 (REVNSQE) are UIM-linker. Residues 100–200 (NSQEEEEEEL…EEPVSVSSGS (101 aa)) form a necessary for interaction with NR6A1 N-terminus region. Position 101 is a phosphoserine (Ser-101). The region spanning 105–124 (EEEELLRKAIAESLNSCRPS) is the UIM 2 domain. Polar residues predominate over residues 117 to 130 (SLNSCRPSDASATR). Ser-140 carries the phosphoserine modification. Over residues 194-204 (VSVSSGSWDQS) the composition is skewed to low complexity. Ser-205 is modified (phosphoserine). Lys-245 is covalently cross-linked (Glycyl lysine isopeptide (Lys-Gly) (interchain with G-Cter in SUMO2)). The segment at 270 to 400 (TGGTVNYFWG…EEEPTTSHGQ (131 aa)) is AIR. Residues 334-369 (NECGQGEQASEKNEGISEDMGDEDKEERQESRASVW) form a disordered region. Acidic residues predominate over residues 349–358 (ISEDMGDEDK). Residues Lys-382 and Lys-387 each participate in a glycyl lysine isopeptide (Lys-Gly) (interchain with G-Cter in SUMO2) cross-link. The interval 391–418 (EEEPTTSHGQSSQGLFVEETSEEGNSVP) is disordered. The tract at residues 400 to 500 (QSSQGLFVEE…EIHTSTFSSS (101 aa)) is necessary for interaction with NR6A1 C-terminus. 2 positions are modified to phosphoserine: Ser-402 and Ser-420. A Glycyl lysine isopeptide (Lys-Gly) (interchain with G-Cter in SUMO2) cross-link involves residue Lys-429. The residue at position 467 (Ser-467) is a Phosphoserine. The UBZ4-type zinc-finger motif lies at 502–529 (QVSCPLCDQGFPPTKIERHAMYCNGLMG). 4 residues coordinate Zn(2+): Cys-505, Cys-508, His-520, and Cys-524. The segment at 505–582 (CPLCDQGFPP…REYQCHVESC (78 aa)) is zinc-finger-like region. Residues Lys-544, Lys-559, Lys-562, and Lys-607 each participate in a glycyl lysine isopeptide (Lys-Gly) (interchain with G-Cter in SUMO2) cross-link. Position 627 is a phosphoserine (Ser-627). Glycyl lysine isopeptide (Lys-Gly) (interchain with G-Cter in SUMO2) cross-links involve residues Lys-635 and Lys-642. Phosphoserine occurs at positions 655 and 679. Glycyl lysine isopeptide (Lys-Gly) (interchain with G-Cter in SUMO2) cross-links involve residues Lys-698 and Lys-699.

Belongs to the RAP80 family. As to quaternary structure, component of the ARISC complex, at least composed of UIMC1/RAP80, ABRAXAS1, BRCC3/BRCC36, BABAM2 and BABAM1/NBA1. Component of the BRCA1-A complex, at least composed of the BRCA1, BARD1, UIMC1/RAP80, ABRAXAS1, BRCC3/BRCC36, BABAM2 and BABAM1/NBA1. In the BRCA1-A complex, interacts directly with ABRAXAS1. Interacts with UBE2I. Interacts with NR6A1. Interacts with ESR1. Interacts with TSP57. Interacts with TRAIP. Sumoylated. Post-translationally, phosphorylated upon DNA damage by ATM or ATR.

It localises to the nucleus. Its function is as follows. Ubiquitin-binding protein. Specifically recognizes and binds 'Lys-63'-linked ubiquitin. Plays a central role in the BRCA1-A complex by specifically binding 'Lys-63'-linked ubiquitinated histones H2A and H2AX at DNA lesions sites, leading to target the BRCA1-BARD1 heterodimer to sites of DNA damage at double-strand breaks (DSBs). The BRCA1-A complex also possesses deubiquitinase activity that specifically removes 'Lys-63'-linked ubiquitin on histones H2A and H2AX. Also weakly binds monoubiquitin but with much less affinity than 'Lys-63'-linked ubiquitin. May interact with monoubiquitinated histones H2A and H2B; the relevance of such results is however unclear in vivo. Does not bind Lys-48'-linked ubiquitin. May indirectly act as a transcriptional repressor by inhibiting the interaction of NR6A1 with the corepressor NCOR1. The chain is BRCA1-A complex subunit RAP80 (UIMC1) from Sus scrofa (Pig).